A 209-amino-acid chain; its full sequence is PF03932 family protein CutC (209 aa).

This sequence belongs to the CutC family.

Its subcellular location is the cytoplasm. Functionally, might participate in the control of copper homeostasis; data from other bacteria suggests it is not involved. This chain is PF03932 family protein CutC, found in Enterococcus faecalis (strain ATCC 700802 / V583).